Reading from the N-terminus, the 76-residue chain is MAETDPKTVQDLTSVVQTLLQQMQDKFQTMSDQIIGRIDDMSSRIDDLEKNIADLMTQAGVEELDSENKIPATQKS.

It belongs to the HSBP1 family. As to quaternary structure, homohexamer. Associates with heptad repeats of HSF1 trimers and probably also HSF1 monomers, and with HSP70. Association with HSF1 trimers and HSP70 coincides with attenuation of heat shock response and the conversion of HSF1 trimer to monomer.

It localises to the nucleus. Its function is as follows. Negative regulator of the heat shock response. Negatively affects HSF1 DNA-binding activity. May have a role in the suppression of the activation of the stress response during the aging process. The protein is Heat shock factor-binding protein 1 (HSBP1) of Bos taurus (Bovine).